The following is a 328-amino-acid chain: Gonadotropin-releasing hormone receptor (328 aa).

The Extracellular segment spans residues 1-38 (MQDDTSSEQNPTHCSAINSSVPLVQGALPTLTLSGKIR). Asn18 carries N-linked (GlcNAc...) asparagine glycosylation. A helical transmembrane segment spans residues 39-59 (VTVTFFLFLVSTTLNASFLLK). The Cytoplasmic segment spans residues 60–84 (LQKWTQKKEKGKKLSRMKVLLKHLT). The chain crosses the membrane as a helical span at residues 85–105 (LANLLETLIVMPLDGMWNITV). At 106–115 (QWYAGELLCK) the chain is on the extracellular side. A disulfide bond links Cys114 and Cys196. Residues 116-136 (ILSYLKLFSMYAPAFMMVVIS) traverse the membrane as a helical segment. Residues 137 to 160 (LDRSMAITRPLPVQSNRKLEQSMT) lie on the Cytoplasmic side of the membrane. A helical transmembrane segment spans residues 161 to 181 (GLAWGLSSVLAGPQLYIFKMI). Residues 182 to 208 (HLENGPGQTEVFSQCVTHCSFPQWWHQ) lie on the Extracellular side of the membrane. Residues 209-229 (AFYNFFTFICLFIIPLLIMLI) traverse the membrane as a helical segment. Residues 230 to 271 (CNAKIIFTLTQVLQQDSNKLQLNQSKNNIPRARLRTLKMTVA) lie on the Cytoplasmic side of the membrane. Residues 272–292 (FAASFIVCWTPYYVLGLWYWF) traverse the membrane as a helical segment. Over 293 to 306 (DPGMLHRMSEPVNH) the chain is Extracellular. The helical transmembrane segment at 307–327 (FFFLFAFLNPCFDPLIYGYFS) threads the bilayer. Leu328 is a topological domain (cytoplasmic).

It belongs to the G-protein coupled receptor 1 family.

It is found in the cell membrane. Functionally, receptor for gonadotropin releasing hormone (GnRH) that mediates the action of GnRH to stimulate the secretion of the gonadotropic hormones luteinizing hormone (LH) and follicle-stimulating hormone (FSH). This receptor mediates its action by association with G-proteins that activate a phosphatidylinositol-calcium second messenger system. The polypeptide is Gonadotropin-releasing hormone receptor (GNRHR) (Cavia porcellus (Guinea pig)).